The sequence spans 660 residues: Zeaxanthin epoxidase, chloroplastic (660 aa).

A chloroplast-targeting transit peptide spans 1 to 49 (MYASSARDGIPGKWCNARRKQLPLLISKDFPAELYHSLPCKSLENGHIK). FAD-binding positions include 79–107 (KVLVAGGGIGGLVFALAGKKRGFDVLVFE) and 357–370 (TFSWGKGRVTLLGD). Positions 545–609 (LVLSRDENMP…HGTWFIDNEG (65 aa)) constitute an FHA domain.

Requires FAD as cofactor.

Its subcellular location is the plastid. It localises to the chloroplast membrane. It is found in the chloroplast thylakoid membrane. The enzyme catalyses all-trans-zeaxanthin + 4 reduced [2Fe-2S]-[ferredoxin] + 2 O2 + 4 H(+) = all-trans-violaxanthin + 4 oxidized [2Fe-2S]-[ferredoxin] + 2 H2O. It carries out the reaction all-trans-zeaxanthin + 2 reduced [2Fe-2S]-[ferredoxin] + O2 + 2 H(+) = all-trans-antheraxanthin + 2 oxidized [2Fe-2S]-[ferredoxin] + H2O. It catalyses the reaction all-trans-antheraxanthin + 2 reduced [2Fe-2S]-[ferredoxin] + O2 + 2 H(+) = all-trans-violaxanthin + 2 oxidized [2Fe-2S]-[ferredoxin] + H2O. The catalysed reaction is beta-cryptoxanthin + 2 reduced [2Fe-2S]-[ferredoxin] + O2 + 2 H(+) = (5R,6S)-5,6-epoxi-beta-cryptoxanthin + 2 oxidized [2Fe-2S]-[ferredoxin] + H2O. It participates in plant hormone biosynthesis; abscisate biosynthesis. In terms of biological role, converts zeaxanthin into antheraxanthin and subsequently violaxanthin. Also acts on beta-cryptoxanthin. Involved in the epoxidation of zeaxanthin. This Capsicum annuum (Capsicum pepper) protein is Zeaxanthin epoxidase, chloroplastic.